The chain runs to 110 residues: Large ribosomal subunit protein uL22 (110 aa).

Belongs to the universal ribosomal protein uL22 family. As to quaternary structure, part of the 50S ribosomal subunit.

In terms of biological role, this protein binds specifically to 23S rRNA; its binding is stimulated by other ribosomal proteins, e.g. L4, L17, and L20. It is important during the early stages of 50S assembly. It makes multiple contacts with different domains of the 23S rRNA in the assembled 50S subunit and ribosome. Functionally, the globular domain of the protein is located near the polypeptide exit tunnel on the outside of the subunit, while an extended beta-hairpin is found that lines the wall of the exit tunnel in the center of the 70S ribosome. This is Large ribosomal subunit protein uL22 from Shigella flexneri serotype 5b (strain 8401).